Here is a 365-residue protein sequence, read N- to C-terminus: MNKLALYCRPGFEKELAAEISEKAAELGIFGFARVEENQGYVIFECYQTDDADRLAREIPFNQLIFARQMIVVSDLLTDLPVQDRISPIIQQYQAIAHQINLTYSTELLVETADTNEAKSLSAFCRKFTVPLRQALKKQGWLQGTRHHKQGLTLHILMLDSTQCYVGYSYNYNHSEHFMGIPRLKFPLDAPSRSTLKLEEAILTFLSREEEKKRLNEQMYAVDLGACPGGWTYQLVKRGLFVYAVDHGKMAASLHDTGRIEHCAEDGFKFQPPKRSKIDWLVCDMVEQPSRISQLILKWLVNGWCHETIFNLKLPMKKRYLEVKKCLQMIEESLEKQGFRYHIQAKHLYHDREEITVHIAVKSLD.

Residues serine 194, 227-230 (CPGG), aspartate 246, aspartate 266, and aspartate 284 contribute to the S-adenosyl-L-methionine site. Lysine 313 serves as the catalytic Proton acceptor.

The protein belongs to the class I-like SAM-binding methyltransferase superfamily. RNA methyltransferase RlmE family. RlmM subfamily. In terms of assembly, monomer.

The protein localises to the cytoplasm. The catalysed reaction is cytidine(2498) in 23S rRNA + S-adenosyl-L-methionine = 2'-O-methylcytidine(2498) in 23S rRNA + S-adenosyl-L-homocysteine + H(+). Catalyzes the 2'-O-methylation at nucleotide C2498 in 23S rRNA. The protein is Ribosomal RNA large subunit methyltransferase M of Pasteurella multocida (strain Pm70).